The following is a 41-amino-acid chain: Ornatin-A2 (41 aa).

Residues 33-35 (RGD) carry the Cell attachment site motif.

It belongs to the ornatin family.

It localises to the secreted. In terms of biological role, potent inhibitor of fibrinogen interaction with platelet receptors expressed on glycoprotein IIb-IIIa complex. May prevent blood from clotting during either feeding and/or storage of ingested blood. The chain is Ornatin-A2 from Placobdella ornata (Turtle leech).